An 82-amino-acid polypeptide reads, in one-letter code: Conotoxin C11GB (82 aa).

Positions 1–22 are cleaved as a signal peptide; the sequence is MKLTCVMIVAVLFLTAWTVVTA. Residues 23-53 constitute a propeptide that is removed on maturation; the sequence is EPHSSNVLENLYLKAHHEMENPEASKLNTRD. Disulfide bonds link cysteine 55–cysteine 72, cysteine 62–cysteine 76, and cysteine 71–cysteine 80.

This sequence belongs to the conotoxin O1 superfamily. As to expression, expressed by the venom duct.

Its subcellular location is the secreted. The protein is Conotoxin C11GB of Conus vexillum (Flag cone).